The primary structure comprises 85 residues: Protein U62 (85 aa).

It belongs to the herpesviridae UL91 family.

The sequence is that of Protein U62 (U62) from Homo sapiens (Human).